The primary structure comprises 305 residues: Homoserine O-acetyltransferase (305 aa).

Cysteine 142 (acyl-thioester intermediate) is an active-site residue. Lysine 163 and serine 192 together coordinate substrate. Histidine 235 acts as the Proton acceptor in catalysis. The active site involves glutamate 237. Substrate is bound at residue arginine 249.

Belongs to the MetA family.

Its subcellular location is the cytoplasm. It catalyses the reaction L-homoserine + acetyl-CoA = O-acetyl-L-homoserine + CoA. It functions in the pathway amino-acid biosynthesis; L-methionine biosynthesis via de novo pathway; O-acetyl-L-homoserine from L-homoserine: step 1/1. Its function is as follows. Transfers an acetyl group from acetyl-CoA to L-homoserine, forming acetyl-L-homoserine. The polypeptide is Homoserine O-acetyltransferase (Bacteroides thetaiotaomicron (strain ATCC 29148 / DSM 2079 / JCM 5827 / CCUG 10774 / NCTC 10582 / VPI-5482 / E50)).